A 253-amino-acid chain; its full sequence is NAD-dependent protein deacylase 2 (253 aa).

The region spanning 1–252 is the Deacetylase sirtuin-type domain; sequence MEDEIRKAAE…VEEVKRLRSE (252 aa). NAD(+)-binding positions include 23–42 and 100–103; these read GAGISAESGIPTFRGEDGLW and QNID. The Proton acceptor role is filled by His-118. Zn(2+) contacts are provided by Cys-126, Cys-129, Cys-150, and Cys-153. Residues 191-193, 217-219, and Ala-235 contribute to the NAD(+) site; these read GSS and NAE.

Belongs to the sirtuin family. Class III subfamily. The cofactor is Zn(2+).

It is found in the cytoplasm. The catalysed reaction is N(6)-acetyl-L-lysyl-[protein] + NAD(+) + H2O = 2''-O-acetyl-ADP-D-ribose + nicotinamide + L-lysyl-[protein]. Functionally, NAD-dependent protein deacetylase which modulates the activities of several proteins which are inactive in their acetylated form. Deacetylates the N-terminal lysine residue of Alba, the major archaeal chromatin protein and that, in turn, increases Alba's DNA binding affinity, thereby repressing transcription. The polypeptide is NAD-dependent protein deacylase 2 (Archaeoglobus fulgidus (strain ATCC 49558 / DSM 4304 / JCM 9628 / NBRC 100126 / VC-16)).